We begin with the raw amino-acid sequence, 162 residues long: MTPLFRKAVWLLFAVSVCAFAGSLAAQYVLGMEPCVLCISQRLCVLATALCAAVVLACKPKGRVGGLSGAVFISIPAVTGISVAAYQLWLQSLPPGAAPSCGAPWTFRLKGWPLFDWFEPVVRGFGNCAEPDYLLGVALPVWSAAYFLAVVLTVWWAWARAK.

The Cytoplasmic segment spans residues M1–A8. The chain crosses the membrane as a helical span at residues V9–A25. The Periplasmic segment spans residues A26–L43. A disulfide bridge connects residues C35 and C38. Residues C44–P60 traverse the membrane as a helical segment. Residues K61–L67 are Cytoplasmic-facing. The chain crosses the membrane as a helical span at residues S68–A85. Residues Y86 to V141 are Periplasmic-facing. A disulfide bridge links C101 with C128. The chain crosses the membrane as a helical span at residues W142–R160. At A161–K162 the chain is on the cytoplasmic side.

The protein belongs to the DsbB family.

It localises to the cell inner membrane. Required for disulfide bond formation in some periplasmic proteins. Acts by oxidizing the DsbA protein. This Neisseria gonorrhoeae (strain ATCC 700825 / FA 1090) protein is Disulfide bond formation protein B.